An 820-amino-acid polypeptide reads, in one-letter code: Trimethylamine-N-oxide reductase (820 aa).

A signal peptide (tat-type signal) is located at residues 1-33 (MAITRRSFLKGVATTSAASVIGPSLLASASANA). Serine 179 contacts Mo-bis(molybdopterin guanine dinucleotide).

This sequence belongs to the prokaryotic molybdopterin-containing oxidoreductase family. The cofactor is Mo-bis(molybdopterin guanine dinucleotide). Post-translationally, predicted to be exported by the Tat system. The position of the signal peptide cleavage has not been experimentally proven.

Its subcellular location is the periplasm. It carries out the reaction trimethylamine + 2 Fe(III)-[cytochrome c] + H2O = trimethylamine N-oxide + 2 Fe(II)-[cytochrome c] + 3 H(+). Its function is as follows. Reduces trimethylamine-N-oxide (TMAO) into trimethylamine; an anaerobic reaction coupled to energy-yielding reactions. This is Trimethylamine-N-oxide reductase (torA) from Vibrio parahaemolyticus serotype O3:K6 (strain RIMD 2210633).